Consider the following 255-residue polypeptide: Gene 54 protein (255 aa).

In Mycobacterium (Mycobacteriophage L5), this protein is Gene 54 protein (54).